The primary structure comprises 36 residues: Turgencin-A (36 aa).

3 disulfides stabilise this stretch: C8/C33, C12/C29, and C17/C26. M10 is modified (methionine sulfoxide). At V36 the chain carries Valine amide.

The protein localises to the secreted. In terms of biological role, has antimicrobial activity against Gram-positive bacteria (C.glutamicum ATCC 13032 (MIC=0.4 uM), B.subtilis ATCC 23857 (MIC=0.4 uM) and S.aureus ATCC 9144 (MIC=6.3 uM)) and Gram-negative bacteria (E.coli ATCC 25922 (MIC=0.8 uM) and P.aeruginosa ATCC 27853 (MIC=1.6 uM)). The sequence is that of Turgencin-A from Synoicum turgens (Colonial ascidian).